Consider the following 524-residue polypeptide: Glucose-6-phosphate 1-dehydrogenase (524 aa).

A Phosphoserine modification is found at Ser-20. Residues 42 to 49, Arg-76, and Lys-175 each bind NADP(+); that span reads GASGDLAK. D-glucose 6-phosphate-binding positions include Lys-175, 205–209, Glu-243, and Asp-262; that span reads HYLGK. The Proton acceptor role is filled by His-267. NADP(+) is bound at residue Arg-362. Residues Lys-365 and Arg-370 each contribute to the D-glucose 6-phosphate site. NADP(+)-binding residues include Lys-371, Arg-375, and Arg-398. D-glucose 6-phosphate is bound at residue Gln-400. Residues 406–408, 426–428, Arg-492, Tyr-508, and Trp-514 contribute to the NADP(+) site; these read YFK and DLT.

The protein belongs to the glucose-6-phosphate dehydrogenase family.

The protein localises to the cytoplasm. The protein resides in the cytosol. The enzyme catalyses D-glucose 6-phosphate + NADP(+) = 6-phospho-D-glucono-1,5-lactone + NADPH + H(+). It functions in the pathway carbohydrate degradation; pentose phosphate pathway; D-ribulose 5-phosphate from D-glucose 6-phosphate (oxidative stage): step 1/3. In terms of biological role, cytosolic glucose-6-phosphate dehydrogenase that catalyzes the first and rate-limiting step of the oxidative branch within the pentose phosphate pathway/shunt, an alternative route to glycolysis for the dissimilation of carbohydrates and a major source of reducing power and metabolic intermediates for fatty acid and nucleic acid biosynthetic processes. This chain is Glucose-6-phosphate 1-dehydrogenase, found in Drosophila melanogaster (Fruit fly).